The primary structure comprises 382 residues: Succinyl-diaminopimelate desuccinylase (382 aa).

His-73 is a Zn(2+) binding site. Residue Asp-75 is part of the active site. Zn(2+) is bound at residue Asp-106. The active-site Proton acceptor is Glu-140. Positions 141, 169, and 355 each coordinate Zn(2+).

It belongs to the peptidase M20A family. DapE subfamily. In terms of assembly, homodimer. Zn(2+) serves as cofactor. Co(2+) is required as a cofactor.

The enzyme catalyses N-succinyl-(2S,6S)-2,6-diaminopimelate + H2O = (2S,6S)-2,6-diaminopimelate + succinate. It participates in amino-acid biosynthesis; L-lysine biosynthesis via DAP pathway; LL-2,6-diaminopimelate from (S)-tetrahydrodipicolinate (succinylase route): step 3/3. Catalyzes the hydrolysis of N-succinyl-L,L-diaminopimelic acid (SDAP), forming succinate and LL-2,6-diaminopimelate (DAP), an intermediate involved in the bacterial biosynthesis of lysine and meso-diaminopimelic acid, an essential component of bacterial cell walls. This is Succinyl-diaminopimelate desuccinylase from Saccharophagus degradans (strain 2-40 / ATCC 43961 / DSM 17024).